The following is a 79-amino-acid chain: Dolichyl-diphosphooligosaccharide--protein glycosyltransferase subunit TMEM258 (79 aa).

2 helical membrane-spanning segments follow: residues 17–37 and 55–75; these read VFPHLTVVLLAIGMFFTAWFF and LISLVASLFMGFGVLFLLLWV.

This sequence belongs to the OST5 family. In terms of assembly, component of the oligosaccharyltransferase (OST) complex.

It localises to the membrane. The protein resides in the endoplasmic reticulum. It is found in the cytoplasm. Its pathway is protein modification; protein glycosylation. Its function is as follows. Subunit of the oligosaccharyl transferase (OST) complex that catalyzes the initial transfer of a defined glycan (Glc(3)Man(9)GlcNAc(2) in eukaryotes) from the lipid carrier dolichol-pyrophosphate to an asparagine residue within an Asn-X-Ser/Thr consensus motif in nascent polypeptide chains, the first step in protein N-glycosylation. N-glycosylation occurs cotranslationally and the complex associates with the Sec61 complex at the channel-forming translocon complex that mediates protein translocation across the endoplasmic reticulum (ER). All subunits are required for a maximal enzyme activity. In Gallus gallus (Chicken), this protein is Dolichyl-diphosphooligosaccharide--protein glycosyltransferase subunit TMEM258.